We begin with the raw amino-acid sequence, 245 residues long: Phycocyanobilin:ferredoxin oxidoreductase (245 aa).

Belongs to the HY2 family.

It catalyses the reaction (2R,3Z)-phycocyanobilin + 4 oxidized [2Fe-2S]-[ferredoxin] = biliverdin IXalpha + 4 reduced [2Fe-2S]-[ferredoxin] + 4 H(+). Functionally, catalyzes the four-electron reduction of biliverdin IX-alpha (2-electron reduction at both the A and D rings); the reaction proceeds via an isolatable 2-electron intermediate, 181,182-dihydrobiliverdin. The polypeptide is Phycocyanobilin:ferredoxin oxidoreductase (Microcystis aeruginosa (strain NIES-843 / IAM M-2473)).